Here is a 183-residue protein sequence, read N- to C-terminus: UPF0200 protein Memar_1556 (183 aa).

8 to 15 (GMPASGKG) is an ATP binding site.

It belongs to the UPF0200 family.

This is UPF0200 protein Memar_1556 from Methanoculleus marisnigri (strain ATCC 35101 / DSM 1498 / JR1).